The chain runs to 338 residues: MQQQLDALQLEALKAIREAADLTILERIRVDFLGKKGKLSALLGGMARLPAEERPVVGALVNQVKARVEEALAAQQTHLQDQLIELRLVAEALDVTMPGRFVPPGRLHPLTATTDRIVDVFVGLGFTVASGPQIETEYYNFEALNTPADHPARDMQDTFYLSDGLVLRTQTSSVQIRYMEENDPPVRICVPGRVYRRDQVTNRHSPVFHQLELLAVDEEITFGDLKGTLTFFTQEMFGDRPVRFRPSFFPFTEPSAEVDVQCRFCDGKGCRTCSHTGWLEIAGCGMVDPNVFQAVGYNPEKVQGFAAGMGIERIAMLLYDINDIRLFYTNDLRFLRQF.

Glu253 contacts Mg(2+).

Belongs to the class-II aminoacyl-tRNA synthetase family. Phe-tRNA synthetase alpha subunit type 1 subfamily. In terms of assembly, tetramer of two alpha and two beta subunits. The cofactor is Mg(2+).

The protein resides in the cytoplasm. It catalyses the reaction tRNA(Phe) + L-phenylalanine + ATP = L-phenylalanyl-tRNA(Phe) + AMP + diphosphate + H(+). The sequence is that of Phenylalanine--tRNA ligase alpha subunit from Gloeobacter violaceus (strain ATCC 29082 / PCC 7421).